The primary structure comprises 483 residues: Spermatogenesis-defective protein 39 homolog (483 aa).

The protein belongs to the SPE39 family. Interacts with vps33b. In terms of tissue distribution, high levels detected in liver and small intestine of larvae at 5 days post-fertilization.

It is found in the cytoplasm. The protein resides in the cytoplasmic vesicle. It localises to the early endosome. Its subcellular location is the recycling endosome. The protein localises to the late endosome. Its function is as follows. Proposed to be involved in endosomal maturation implicating in part vps33b. In epithelial cells, the vps33b:vipas39 complex may play a role in the apical rab11a-dependent recycling pathway and in the maintenance of the apical-basolateral polarity. May play a role in lysosomal trafficking, probably via association with the core HOPS complex in a discrete population of endosomes; the functions seems to be independent of vps33b. May play a role in vesicular trafficking during spermatogenesis. May be involved in direct or indirect transcriptional regulation of E-cadherin. The protein is Spermatogenesis-defective protein 39 homolog (vipas39) of Danio rerio (Zebrafish).